The following is a 142-amino-acid chain: Large ribosomal subunit protein uL11 (142 aa).

The protein belongs to the universal ribosomal protein uL11 family. As to quaternary structure, part of the ribosomal stalk of the 50S ribosomal subunit. Interacts with L10 and the large rRNA to form the base of the stalk. L10 forms an elongated spine to which L12 dimers bind in a sequential fashion forming a multimeric L10(L12)X complex. Post-translationally, one or more lysine residues are methylated.

Its function is as follows. Forms part of the ribosomal stalk which helps the ribosome interact with GTP-bound translation factors. This is Large ribosomal subunit protein uL11 from Shewanella halifaxensis (strain HAW-EB4).